The following is a 208-amino-acid chain: MEDLLDLDEELRYSLATSRAKMGRRAQQESAQAENHLNGKNSSLTLTGETSSAKLPRCRQGGWAGDSVKASKFRRKASEEIEDFRLRPQSLNGSDYGGDIPIIPDLEEVQEEDFVLQVAAPPSIQIKRVMTYRDLDNDLMKYSAIQTLDGEIDLKLLTKVLAPEHEVREDDVGWDWDHLFTEVSSEVLTEWDPLQTEKEDPAGQARHT.

Met1 bears the N-acetylmethionine mark. The tract at residues 18–65 (SRAKMGRRAQQESAQAENHLNGKNSSLTLTGETSSAKLPRCRQGGWAG) is disordered. The span at 28–53 (QESAQAENHLNGKNSSLTLTGETSSA) shows a compositional bias: polar residues. Ser78 bears the Phosphoserine mark.

It belongs to the IFT43 family. In terms of assembly, component of the IFT complex A (IFT-A) complex. IFT-A complex is divided into a core subcomplex composed of IFT122:IFT140:WDR19 which is associated with TULP3 and a peripheral subcomplex composed of IFT43:WDR35:TTC21B. Interacts directy with IFT122, WDR35 and TTC21B. In terms of tissue distribution, expressed in the retina, predominantly in the photoreceptor outer segment.

The protein resides in the cytoplasm. Its subcellular location is the cytoskeleton. It localises to the cell projection. It is found in the cilium. In terms of biological role, as a component of IFT complex A (IFT-A), a complex required for retrograde ciliary transport and entry into cilia of G protein-coupled receptors (GPCRs), it is involved in ciliogenesis. Involved in retrograde ciliary transport along microtubules from the ciliary tip to the base. This chain is Intraflagellar transport protein 43 homolog, found in Homo sapiens (Human).